A 1007-amino-acid polypeptide reads, in one-letter code: Ephrin type-A receptor 10 (1007 aa).

Residues 1-22 (METGAGPHPLRLFVCLIPLCLA) form the signal peptide. Topologically, residues 23–565 (LLLGPGRPGT…APGSRDQSPA (543 aa)) are extracellular. One can recognise an Eph LBD domain in the interval 35–216 (EVILLDSKAS…YYKQCRATVR (182 aa)). Asparagine 311 carries N-linked (GlcNAc...) asparagine glycosylation. Disordered regions lie at residues 323–343 (ARSPTDPPSASCTRPPSAPRD) and 467–486 (PQSVSLSWREPVPAGAPGTN). 2 Fibronectin type-III domains span residues 340-452 (APRD…TGPG) and 456-554 (EEDE…TPGE). Asparagine 486 is a glycosylation site (N-linked (GlcNAc...) asparagine). The chain crosses the membrane as a helical span at residues 566–586 (VVVTVVTISALLVLGSVMSVL). At 587 to 1007 (AIWRRPCDGK…LQLQGQGVQV (421 aa)) the chain is on the cytoplasmic side. The Protein kinase domain maps to 644–899 (VTLEKSLGAG…PRFSQIHSIL (256 aa)). Residues 932–996 (PSFGSVGAWL…LSGISALQTR (65 aa)) form the SAM domain.

It belongs to the protein kinase superfamily. Tyr protein kinase family. Ephrin receptor subfamily. Expressed in the cochlea, in the organ of Corti, spiral ganglion, and stria vascularis.

It is found in the cell membrane. The catalysed reaction is L-tyrosyl-[protein] + ATP = O-phospho-L-tyrosyl-[protein] + ADP + H(+). In terms of biological role, receptor for members of the ephrin-A family. Binds to EFNA3, EFNA4 and EFNA5. This chain is Ephrin type-A receptor 10 (Epha10), found in Mus musculus (Mouse).